The primary structure comprises 488 residues: Ribulose bisphosphate carboxylase large chain (488 aa).

Substrate-binding residues include Asn127 and Thr177. Lys179 functions as the Proton acceptor in the catalytic mechanism. Position 181 (Lys181) interacts with substrate. Positions 205, 207, and 208 each coordinate Mg(2+). Lys205 bears the N6-carboxylysine mark. His297 (proton acceptor) is an active-site residue. Positions 298, 330, and 382 each coordinate substrate.

Belongs to the RuBisCO large chain family. Type I subfamily. Heterohexadecamer of 8 large chains and 8 small chains. Mg(2+) is required as a cofactor.

It localises to the plastid. The protein localises to the chloroplast. It catalyses the reaction 2 (2R)-3-phosphoglycerate + 2 H(+) = D-ribulose 1,5-bisphosphate + CO2 + H2O. The enzyme catalyses D-ribulose 1,5-bisphosphate + O2 = 2-phosphoglycolate + (2R)-3-phosphoglycerate + 2 H(+). Its function is as follows. RuBisCO catalyzes two reactions: the carboxylation of D-ribulose 1,5-bisphosphate, the primary event in carbon dioxide fixation, as well as the oxidative fragmentation of the pentose substrate in the photorespiration process. Both reactions occur simultaneously and in competition at the same active site. The protein is Ribulose bisphosphate carboxylase large chain (rbcL) of Pyropia haitanensis (Red seaweed).